The following is a 380-amino-acid chain: MSCPYAGSGNDHDDAAVPLSTEVGKIYGEYLMLDKLLDAQCMLSKEDKRPVHDEHLFIITHQAYELWFKQIIFEFDSIRDMLDAEVIDETKTLEIVKRLNRVVLILKLLVDQVPILETMTPLDFMDFRKYLAPASGFQSLQFRLIENKLGVLTEQRVRYNQKYSDVFGGDEDALTAIRSSEQEPSLLELVQRWLERTPGLEESGFNFWEKFQQSVDKFLEAQVHSAMEEPVERAKNYRLMDIEKRREVYRSIFDPAVHDALVRRGDRRFSHRALQGAIMITFYRDEPRFSQPHQLLTLLMDIDSLITKWRYNHVIMVQRMIGSQQLGTGGSSGYQYLRSTLSDRYKVFLDLFNLSTFLIPREAIPPLDESIRKKLINKSV.

Residues 57–61 and Arg128 contribute to the substrate site; that span reads FIITH. Heme is bound at residue His313. Thr328 lines the substrate pocket.

The protein belongs to the tryptophan 2,3-dioxygenase family. In terms of assembly, homotetramer. Dimer of dimers. The cofactor is heme.

The catalysed reaction is L-tryptophan + O2 = N-formyl-L-kynurenine. Its pathway is amino-acid degradation; L-tryptophan degradation via kynurenine pathway; L-kynurenine from L-tryptophan: step 1/2. It functions in the pathway pigment biosynthesis; ommochrome biosynthesis. Functionally, heme-dependent dioxygenase that catalyzes the oxidative cleavage of the L-tryptophan (L-Trp) pyrrole ring and converts L-tryptophan to N-formyl-L-kynurenine. Catalyzes the oxidative cleavage of the indole moiety. This chain is Tryptophan 2,3-dioxygenase, found in Drosophila ananassae (Fruit fly).